The following is a 102-amino-acid chain: Large ribosomal subunit protein mL63 (102 aa).

This sequence belongs to the mitochondrion-specific ribosomal protein mL63 family. As to quaternary structure, component of the mitochondrial large ribosomal subunit (mt-LSU). Mature mammalian 55S mitochondrial ribosomes consist of a small (28S) and a large (39S) subunit. The 28S small subunit contains a 12S ribosomal RNA (12S mt-rRNA) and 30 different proteins. The 39S large subunit contains a 16S rRNA (16S mt-rRNA), a copy of mitochondrial valine transfer RNA (mt-tRNA(Val)), which plays an integral structural role, and 52 different proteins.

The protein resides in the mitochondrion. In Homo sapiens (Human), this protein is Large ribosomal subunit protein mL63 (MRPL57).